The sequence spans 321 residues: Peroxidase 5 (321 aa).

An N-terminal signal peptide occupies residues Met1–Ala24. Pyrrolidone carboxylic acid is present on Gln25. Intrachain disulfides connect Cys35–Cys115, Cys68–Cys73, Cys121–Cys317, and Cys201–Cys227. His66 (proton acceptor) is an active-site residue. Asp67, Val70, Gly72, Asp74, and Ser76 together coordinate Ca(2+). Pro164 is a substrate binding site. His194 contacts heme b. Thr195 contacts Ca(2+). Asn211 is a glycosylation site (N-linked (GlcNAc...) asparagine). Positions 240, 243, and 248 each coordinate Ca(2+). A glycan (N-linked (GlcNAc...) asparagine) is linked at Asn285.

This sequence belongs to the peroxidase family. Classical plant (class III) peroxidase subfamily. Heme b is required as a cofactor. Requires Ca(2+) as cofactor.

Its subcellular location is the secreted. The enzyme catalyses 2 a phenolic donor + H2O2 = 2 a phenolic radical donor + 2 H2O. Functionally, removal of H(2)O(2), oxidation of toxic reductants, biosynthesis and degradation of lignin, suberization, auxin catabolism, response to environmental stresses such as wounding, pathogen attack and oxidative stress. These functions might be dependent on each isozyme/isoform in each plant tissue. The polypeptide is Peroxidase 5 (PER5) (Arabidopsis thaliana (Mouse-ear cress)).